We begin with the raw amino-acid sequence, 501 residues long: Probable malate:quinone oxidoreductase (501 aa).

This sequence belongs to the MQO family. FAD serves as cofactor.

The enzyme catalyses (S)-malate + a quinone = a quinol + oxaloacetate. Its pathway is carbohydrate metabolism; tricarboxylic acid cycle; oxaloacetate from (S)-malate (quinone route): step 1/1. The sequence is that of Probable malate:quinone oxidoreductase from Paenarthrobacter aurescens (strain TC1).